The chain runs to 433 residues: Glutamate-1-semialdehyde 2,1-aminomutase (433 aa).

At K273 the chain carries N6-(pyridoxal phosphate)lysine.

This sequence belongs to the class-III pyridoxal-phosphate-dependent aminotransferase family. HemL subfamily. In terms of assembly, homodimer. Pyridoxal 5'-phosphate serves as cofactor.

Its subcellular location is the cytoplasm. It catalyses the reaction (S)-4-amino-5-oxopentanoate = 5-aminolevulinate. The protein operates within porphyrin-containing compound metabolism; protoporphyrin-IX biosynthesis; 5-aminolevulinate from L-glutamyl-tRNA(Glu): step 2/2. Its pathway is porphyrin-containing compound metabolism; chlorophyll biosynthesis. This chain is Glutamate-1-semialdehyde 2,1-aminomutase, found in Gloeothece citriformis (strain PCC 7424) (Cyanothece sp. (strain PCC 7424)).